Consider the following 104-residue polypeptide: MKFRPLHDRVVVRRLNAEEKTAGGIIIPDTAKEKPMEGEVIAVGPGARNEAGAVVALDVKAGDRILFGKWSGTEVKIDGEELLIMKESDIMGIIEGTASKKKAA.

The protein belongs to the GroES chaperonin family. Heptamer of 7 subunits arranged in a ring. Interacts with the chaperonin GroEL.

Its subcellular location is the cytoplasm. Together with the chaperonin GroEL, plays an essential role in assisting protein folding. The GroEL-GroES system forms a nano-cage that allows encapsulation of the non-native substrate proteins and provides a physical environment optimized to promote and accelerate protein folding. GroES binds to the apical surface of the GroEL ring, thereby capping the opening of the GroEL channel. In Acidiphilium cryptum (strain JF-5), this protein is Co-chaperonin GroES.